The primary structure comprises 37 residues: Potassium channel toxin alpha-KTx 1.13 (37 aa).

Gln-1 carries the pyrrolidone carboxylic acid modification. Disulfide bonds link Cys-7-Cys-28, Cys-13-Cys-33, and Cys-17-Cys-35. The tract at residues 26–33 is interaction with Ca(2+)-activated K(+) channels; the sequence is GKCMNKKC.

It belongs to the short scorpion toxin superfamily. Potassium channel inhibitor family. Alpha-KTx 01 subfamily. As to expression, expressed by the venom gland.

It is found in the secreted. Its function is as follows. Potent selective inhibitor of high conductance (maxi-K), different medium and small conductance calcium-activated potassium channels (KCa1.1/KCNMA1 and others), as well as a voltage-dependent potassium channel (Kv1.3/KCNA3&gt;Kv1.2/KCNA2&gt;Kv1.6/KCNA3&gt;&gt;Shaker/Sh). It blocks channel activity by a simple bimolecular inhibition process. Functionally, has a pH-specific antimicrobial activity against bacteria (B.subtilis, E.coli and S.aureus) and the fungus C.albicans. The polypeptide is Potassium channel toxin alpha-KTx 1.13 (Leiurus hebraeus (Hebrew deathstalker scorpion)).